Here is a 775-residue protein sequence, read N- to C-terminus: Dipeptidyl peptidase 4 (775 aa).

Residues 1–15 (MKLLSLLMLAGIAQA) form the signal peptide. 4 N-linked (GlcNAc...) asparagine glycosylation sites follow: N81, N111, N154, and N219. Catalysis depends on charge relay system residues S613, D690, and H725.

The protein belongs to the peptidase S9B family.

The protein resides in the secreted. It carries out the reaction Release of an N-terminal dipeptide, Xaa-Yaa-|-Zaa-, from a polypeptide, preferentially when Yaa is Pro, provided Zaa is neither Pro nor hydroxyproline.. Its function is as follows. Extracellular dipeptidyl-peptidase which removes N-terminal dipeptides sequentially from polypeptides having unsubstituted N-termini provided that the penultimate residue is proline. Contributes to pathogenicity. This Trichophyton rubrum (Athlete's foot fungus) protein is Dipeptidyl peptidase 4 (DPP4).